The chain runs to 121 residues: Basic phospholipase A2 VRV-PL-V (121 aa).

7 disulfide bridges follow: C26–C115, C28–C44, C43–C95, C49–C121, C50–C88, C57–C81, and C75–C86. 3 residues coordinate Ca(2+): Y27, G29, and G31. H47 is a catalytic residue. D48 contributes to the Ca(2+) binding site. The active site involves D89.

This sequence belongs to the phospholipase A2 family. Group II subfamily. D49 sub-subfamily. Monomer. Ca(2+) serves as cofactor. Expressed by the venom gland.

The protein localises to the secreted. It carries out the reaction a 1,2-diacyl-sn-glycero-3-phosphocholine + H2O = a 1-acyl-sn-glycero-3-phosphocholine + a fatty acid + H(+). Snake venom phospholipase A2 (PLA2) that has a low enzymatic activity. PLA2 catalyzes the calcium-dependent hydrolysis of the 2-acyl groups in 3-sn-phosphoglycerides. This chain is Basic phospholipase A2 VRV-PL-V, found in Daboia russelii (Russel's viper).